The primary structure comprises 528 residues: Protein spinster homolog 1 (528 aa).

The tract at residues 1–44 (MSGSDTAPFLSQADDTDDGPAPGTPGLPGSMGNPKSEDPAVPDQ) is disordered. Transmembrane regions (helical) follow at residues 50–70 (ITGLSSGHSALIVAVLCYINL), 98–118 (GLIQTVFISSYMVLAPVFGYL), 126–146 (YLMCGGIAFWSLVTLGSSFIP), 160–180 (VGVGEASYSTIAPTLIADLFV), 187–207 (MLSVFYFAIPVGSGLGYIAGS), 218–238 (WALRVTPGLGVLAVVLLFLVV), 278–298 (LGFTAVAFVTGSLALWAPAFL), 323–343 (LIFGLITCLTGVLGVGLGVEI), 357–377 (LVCAAGLLGSAPFLFLALACA), 381–401 (IVATYIFIFIGETLLSMNWAI), 421–441 (FQIVLSHLLGDAGSPYLIGSI), and 465–485 (MLCAFVGALGGAAFLGTAIFI). Residue S518 is modified to Phosphoserine.

This sequence belongs to the major facilitator superfamily. Spinster (TC 2.A.1.49) family. Interacts with BCL2 and BCL2L1.

It localises to the lysosome membrane. The enzyme catalyses a 1-acyl-sn-glycero-3-phosphocholine(out) + H(+)(out) = a 1-acyl-sn-glycero-3-phosphocholine(in) + H(+)(in). It catalyses the reaction 1-hexadecanoyl-sn-glycero-3-phosphocholine(out) + H(+)(out) = 1-hexadecanoyl-sn-glycero-3-phosphocholine(in) + H(+)(in). The catalysed reaction is 1-(9Z-octadecenoyl)-sn-glycero-3-phosphocholine(out) + H(+)(out) = 1-(9Z-octadecenoyl)-sn-glycero-3-phosphocholine(in) + H(+)(in). It carries out the reaction 1-(5Z,8Z,11Z,14Z-eicosatetraenoyl)-sn-glycero-3-phosphocholine(out) + H(+)(out) = 1-(5Z,8Z,11Z,14Z-eicosatetraenoyl)-sn-glycero-3-phosphocholine(in) + H(+)(in). The enzyme catalyses 1-(4Z,7Z,10Z,13Z,16Z,19Z-docosahexaenoyl)-sn-glycero-3-phosphocholine(out) + H(+)(out) = 1-(4Z,7Z,10Z,13Z,16Z,19Z-docosahexaenoyl)-sn-glycero-3-phosphocholine(in) + H(+)(in). It catalyses the reaction a 1-acyl-sn-glycero-3-phosphoethanolamine(out) + H(+)(out) = a 1-acyl-sn-glycero-3-phosphoethanolamine(in) + H(+)(in). The catalysed reaction is 1-(9Z-octadecenoyl)-sn-glycero-3-phosphoethanolamine(out) + H(+)(out) = 1-(9Z-octadecenoyl)-sn-glycero-3-phosphoethanolamine(in) + H(+)(in). It carries out the reaction 1-acyl-sn-glycero-3-phospho-(1'-sn-glycerol)(out) + H(+)(out) = 1-acyl-sn-glycero-3-phospho-(1'-sn-glycerol)(in) + H(+)(in). The enzyme catalyses 1-(9Z-octadecenoyl)-sn-glycero-3-phospho-(1'-sn-glycerol)(out) + H(+)(out) = 1-(9Z-octadecenoyl)-sn-glycero-3-phospho-(1'-sn-glycerol)(in) + H(+)(in). It catalyses the reaction a 1-O-(1Z-alkenyl)-sn-glycero-3-phosphocholine(out) + H(+)(out) = a 1-O-(1Z-alkenyl)-sn-glycero-3-phosphocholine(in) + H(+)(in). The catalysed reaction is 1-(1Z-hexadecenyl)-sn-glycero-3-phosphocholine(out) + H(+)(out) = 1-(1Z-hexadecenyl)-sn-glycero-3-phosphocholine(in) + H(+)(in). It carries out the reaction a 1-O-(1Z-alkenyl)-sn-glycero-3-phosphoethanolamine(out) + H(+)(out) = a 1-O-(1Z-alkenyl)-sn-glycero-3-phosphoethanolamine(in) + H(+)(in). The enzyme catalyses 1-O-(1Z-hexadecenyl)-sn-glycero-3-phosphoethanolamine(out) + H(+)(out) = 1-O-(1Z-hexadecenyl)-sn-glycero-3-phosphoethanolamine(in) + H(+)(in). In terms of biological role, plays a critical role in the phospholipid salvage pathway from lysosomes to the cytosol. Mediates the rate-limiting, proton-dependent, lysosomal efflux of lysophospholipids, which can then be reacylated by acyltransferases in the endoplasmic reticulum to form phospholipids. Selective for zwitterionic headgroups such as lysophosphatidylcholine (LPC) and lysophosphatidylethanolamine (LPE), can also transport lysophosphatidylglycerol (LPG), but not other anionic lysophospholipids, sphingosine, nor sphingomyelin. Transports lysophospholipids with saturated, monounsaturated, and polyunsaturated fatty acids, such as 1-hexadecanoyl-sn-glycero-3-phosphocholine, 1-(9Z-octadecenoyl)-sn-glycero-3-phosphocholine and 1-(4Z,7Z,10Z,13Z,16Z,19Z-docosahexaenoyl)-sn-glycero-3-phosphocholine, respectively. Can also transport lysoplasmalogen (LPC with a fatty alcohol) such as 1-(1Z-hexadecenyl)-sn-glycero-3-phosphocholine. Essential player in lysosomal homeostasis. Crucial for cell survival under conditions of nutrient limitation. May be involved in necrotic or autophagic cell death. The sequence is that of Protein spinster homolog 1 (SPNS1) from Bos taurus (Bovine).